We begin with the raw amino-acid sequence, 529 residues long: Listeriolysin O (529 aa).

Positions 1–24 (MKKIMLVFITLILVSLPIAQQTEA) are cleaved as a signal peptide. The interval 35–54 (SISSMAPPASPPASPKTPIE) is disordered. The next 4 membrane-spanning stretches (beta stranded) occupy residues 214 to 227 (ESQL…AFKA), 234 to 243 (VNFGAISEGK), 312 to 321 (STKVKAAFDA), and 329 to 341 (SGDV…IKNS). Residues 483–493 (ECTGLAWEWWR) carry the Conserved undecapeptide motif. The Cholesterol binding signature appears at 515-516 (TL).

It belongs to the cholesterol-dependent cytolysin family. As to quaternary structure, homooligomeric pore complex of 35 to 50 subunits; when inserted in the host membrane.

It is found in the secreted. The protein resides in the host membrane. The protein localises to the host cell membrane. Activity of listeriolysin O is regulated on multiple levels. It should be high in the phagosome, thereby allowing escape of the bacteria from the phagosomal compartment. Then, once inside the host cytosol, the activity must be controlled to prevent lysis of the host plasma membrane and loss of the intracellular environment. A cholesterol-dependent toxin that causes cytolysis by forming pores in cholesterol containing host membranes. After binding to target membranes, the protein undergoes a major conformation change, leading to its insertion in the host membrane and formation of an oligomeric pore complex. Cholesterol is required for binding to host membranes, membrane insertion and pore formation; cholesterol binding is mediated by a Thr-Leu pair in the C-terminus. Acts as a major virulence factor required for the escape of bacteria from phagosomal vacuoles and entry into the host cytosol. Can be reversibly inactivated by oxidation. The chain is Listeriolysin O (hly) from Listeria monocytogenes serotype 1/2a (strain 08-5578).